We begin with the raw amino-acid sequence, 404 residues long: CCA-adding enzyme (404 aa).

The ATP site is built by G27 and R30. 2 residues coordinate CTP: G27 and R30. The Mg(2+) site is built by D40 and D42. Positions 111, 154, 157, 160, and 163 each coordinate ATP. Positions 111, 154, 157, 160, and 163 each coordinate CTP.

It belongs to the tRNA nucleotidyltransferase/poly(A) polymerase family. Bacterial CCA-adding enzyme type 3 subfamily. In terms of assembly, homodimer. It depends on Mg(2+) as a cofactor.

It carries out the reaction a tRNA precursor + 2 CTP + ATP = a tRNA with a 3' CCA end + 3 diphosphate. It catalyses the reaction a tRNA with a 3' CCA end + 2 CTP + ATP = a tRNA with a 3' CCACCA end + 3 diphosphate. In terms of biological role, catalyzes the addition and repair of the essential 3'-terminal CCA sequence in tRNAs without using a nucleic acid template. Adds these three nucleotides in the order of C, C, and A to the tRNA nucleotide-73, using CTP and ATP as substrates and producing inorganic pyrophosphate. tRNA 3'-terminal CCA addition is required both for tRNA processing and repair. Also involved in tRNA surveillance by mediating tandem CCA addition to generate a CCACCA at the 3' terminus of unstable tRNAs. While stable tRNAs receive only 3'-terminal CCA, unstable tRNAs are marked with CCACCA and rapidly degraded. The structural flexibility of RNA controls the choice between CCA versus CCACCA addition: following the first CCA addition cycle, nucleotide-binding to the active site triggers a clockwise screw motion, producing torque on the RNA. This ejects stable RNAs, whereas unstable RNAs are refolded while bound to the enzyme and subjected to a second CCA catalytic cycle. This is CCA-adding enzyme from Geobacillus stearothermophilus (Bacillus stearothermophilus).